A 1044-amino-acid polypeptide reads, in one-letter code: Eukaryotic translation initiation factor 3 subunit A (1044 aa).

Positions 92–121 form a coiled coil; sequence LKKFIELAEKKVTEAQAKADEIQSSLESAA. The PCI domain occupies 339 to 523; the sequence is MTKAASFVLL…GVLTFDTDIF (185 aa). Positions 611 to 907 form a coiled coil; it reads IDKKKEAATD…EARRAARKAG (297 aa). The span at 797-901 shows a compositional bias: basic and acidic residues; sequence SEKRHEEFEK…QREEEAEARR (105 aa). The segment at 797–1044 is disordered; sequence SEKRHEEFEK…WVPRWKQQQS (248 aa). Low complexity-rich tracts occupy residues 943–956 and 1006–1017; these read KEAAGGAAPAAAPA and SSSSQPPSRTQT.

It belongs to the eIF-3 subunit A family. In terms of assembly, component of the eukaryotic translation initiation factor 3 (eIF-3) complex.

It is found in the cytoplasm. Functionally, RNA-binding component of the eukaryotic translation initiation factor 3 (eIF-3) complex, which is involved in protein synthesis of a specialized repertoire of mRNAs and, together with other initiation factors, stimulates binding of mRNA and methionyl-tRNAi to the 40S ribosome. The eIF-3 complex specifically targets and initiates translation of a subset of mRNAs involved in cell proliferation. The chain is Eukaryotic translation initiation factor 3 subunit A (tif32) from Aspergillus clavatus (strain ATCC 1007 / CBS 513.65 / DSM 816 / NCTC 3887 / NRRL 1 / QM 1276 / 107).